The following is a 220-amino-acid chain: Glutathione S-transferase (220 aa).

Residues 1-77 form the GST N-terminal domain; sequence MLKLHGFSVS…YIEQTQSGKA (77 aa). Glutathione is bound by residues Y12, V49, and 61–62; that span reads ET. Residues 82–211 form the GST C-terminal domain; sequence DPFEQAKVRE…ADKEASMPAF (130 aa).

Belongs to the GST superfamily. In terms of assembly, monomer and homodimer.

Its subcellular location is the cytoplasm. It carries out the reaction RX + glutathione = an S-substituted glutathione + a halide anion + H(+). Its function is as follows. Conjugation of reduced glutathione to a wide number of exogenous and endogenous hydrophobic electrophiles. This is Glutathione S-transferase from Pseudomonas putida (strain ATCC 700007 / DSM 6899 / JCM 31910 / BCRC 17059 / LMG 24140 / F1).